Consider the following 404-residue polypeptide: Indole-3-acetate O-methyltransferase 1 (404 aa).

S-adenosyl-L-methionine contacts are provided by residues 82–83, Asn88, Asp120, 169–171, and 186–188; these read GC, TFY, and TFS. Positions 208, 212, 294, 295, 297, and 298 each coordinate Mg(2+).

Belongs to the methyltransferase superfamily. SABATH family. In terms of assembly, homodimer. Mg(2+) serves as cofactor. As to expression, expressed in roots and panicles.

The enzyme catalyses (indol-3-yl)acetate + S-adenosyl-L-methionine = methyl (indol-3-yl)acetate + S-adenosyl-L-homocysteine. Catalyzes the methylation of the free carboxyl end of the plant hormone indole-3-acetic acid (IAA). Converts IAA to IAA methyl ester (MeIAA). Regulates IAA activities by IAA methylation. Methylation of IAA plays an important role in regulating plant development and auxin homeostasis. MeIAA seems to be an inactive form of IAA. The sequence is that of Indole-3-acetate O-methyltransferase 1 (IAMT1) from Oryza sativa subsp. japonica (Rice).